A 466-amino-acid polypeptide reads, in one-letter code: MSLSLWQQCLARLQDELPATEFSMWIRPLQAELSDNTLALYAPNRFVLDWVRDKYLNNINGLLNTFCGADAPQLRFEVGTKPVTQTLKTPVHNVVAPTQTTTAQPQRVAPAARSGWDNVPAPAEPTYRSNVNVKHTFDNFVEGKSNQLARAAARQVADNPGGAYNPLFLYGGTGLGKTHLLHAVGNGIMARKPNAKVVYMHSERFVQDMVKALQNNAIEEFKRYYRSVDALLIDDIQFFANKERSQEEFFHTFNALLEGNQQIILTSDRYPKEINGVEDRLKSRFGWGLTVAIEPPELETRVAILMKKADENDIRLPGEVAFFIAKRLRSNVRELEGALNRVIANANFTGRAITIDFVREALRDLLALQEKLVTIDNIQKTVAEYYKIKIADLLSKRRSRSVARPRQMAMALAKELTNHSLPEIGDAFGGRDHTTVLHACRKIEQLREESHDIKEDFSNLIRTLSS.

Residues 1–86 form a domain I, interacts with DnaA modulators region; that stretch reads MSLSLWQQCL…EVGTKPVTQT (86 aa). Positions 86 to 129 are domain II; that stretch reads TLKTPVHNVVAPTQTTTAQPQRVAPAARSGWDNVPAPAEPTYRS. The interval 130–346 is domain III, AAA+ region; sequence NVNVKHTFDN…GALNRVIANA (217 aa). ATP-binding residues include G174, G176, K177, and T178. A domain IV, binds dsDNA region spans residues 347 to 466; it reads NFTGRAITID…FSNLIRTLSS (120 aa).

This sequence belongs to the DnaA family. In terms of assembly, oligomerizes as a right-handed, spiral filament on DNA at oriC.

The protein localises to the cytoplasm. Plays an essential role in the initiation and regulation of chromosomal replication. ATP-DnaA binds to the origin of replication (oriC) to initiate formation of the DNA replication initiation complex once per cell cycle. Binds the DnaA box (a 9 base pair repeat at the origin) and separates the double-stranded (ds)DNA. Forms a right-handed helical filament on oriC DNA; dsDNA binds to the exterior of the filament while single-stranded (ss)DNA is stabiized in the filament's interior. The ATP-DnaA-oriC complex binds and stabilizes one strand of the AT-rich DNA unwinding element (DUE), permitting loading of DNA polymerase. After initiation quickly degrades to an ADP-DnaA complex that is not apt for DNA replication. Binds acidic phospholipids. The sequence is that of Chromosomal replication initiator protein DnaA from Salmonella enteritidis PT4 (strain P125109).